Here is a 916-residue protein sequence, read N- to C-terminus: MSEALSVPAAEGENTVTASESPDLAATSARAEKVGKQEKPEKAEKQSPMMLQYHRIKADHPDTLLFYRMGDFYELFHDDAEKAARLLDITLTARGQSGGVPIRMAGIPFHSADQYLARLVKLGESVAICEQIGDPATSKGPVERKVVRIVTPGTLTDAALLPDKSDTFLLAVHQQTTRRGVSKTGLAWLNLASGELRLMECDAAQLSRELERIRPAEVLYTDGMDLPTLTCARTRLPEWHFDQEAGTRRLREQIGVASLEPFGCSGLGAALGAAGALLNYAATTQGQSLRHVQGVTVERESEFVGLDSATRRNLELTETLRGTESPTLFSLLDTCATTMGSRALRHWLHHPLRDPALPRARQQAIGALITQGPDGLRAVLRKLADVERITARLALLSARPRDLSSLRDTLRALPDVQAATVSSEDAPLLAQTLEEIDIPQDCLELLIRAVADEPSTVIRDGGVIARGYDSELDELRDISENCGQFLIDLETRERERTGITNLRVEYNRVHGFYIEVTNGQADKVPDDYRRRQTLKNAERYITPELKAFEDKALSAQDRALAREKQLYDGLLQALLPHIGSLRRVAGALARLDVLATLAERAKTLDWVQPERVQENVIDISQGRHPVVEGQLAAESVAFIANDCQLNEARKLLLITGPNMGGKSTFMRQTALIVLLACVGAWVPARRAVIGPVDRIFTRIGAADDLAGGRSTFMVEMTEAAAILHNATPSSLVLMDEIGRGTSTFDGLALAWAIARHLLSHNRSHTLFATHYFELTQLPVEFPQAANVHLSAVEHGDGIVFLHAVQDGPASQSYGLQVAQLAGVPQPVIRAARKHLAWLEEQSADATPTPQMDLFSAQSSPSADDEDDKSAGQSAVPPAQAATLEALADIDPDSLSPREALEALYRLKSISETARTV.

The tract at residues 1-47 (MSEALSVPAAEGENTVTASESPDLAATSARAEKVGKQEKPEKAEKQS) is disordered. The span at 30–45 (RAEKVGKQEKPEKAEK) shows a compositional bias: basic and acidic residues. 656-663 (GPNMGGKS) contacts ATP. Polar residues predominate over residues 843–861 (ADATPTPQMDLFSAQSSPS). Positions 843–880 (ADATPTPQMDLFSAQSSPSADDEDDKSAGQSAVPPAQA) are disordered.

It belongs to the DNA mismatch repair MutS family.

This protein is involved in the repair of mismatches in DNA. It is possible that it carries out the mismatch recognition step. This protein has a weak ATPase activity. This is DNA mismatch repair protein MutS from Cupriavidus metallidurans (strain ATCC 43123 / DSM 2839 / NBRC 102507 / CH34) (Ralstonia metallidurans).